Reading from the N-terminus, the 352-residue chain is Photosystem II D2 protein (352 aa).

At Thr2 the chain carries N-acetylthreonine. The residue at position 2 (Thr2) is a Phosphothreonine. A helical membrane pass occupies residues 40-60 (CAYFALGGWLTGTTFVTSWYT). Position 117 (His117) interacts with chlorophyll a. Residues 124-140 (GFMLRQFEIARAVKIRP) traverse the membrane as a helical segment. Gln129 and Asn142 together coordinate pheophytin a. The helical transmembrane segment at 152-165 (VFVSVFLIYPLGQA) threads the bilayer. Position 197 (His197) interacts with chlorophyll a. A helical membrane pass occupies residues 207 to 227 (AALLCAIHGATVENTLFEDGD). Residues His214 and Phe261 each coordinate a plastoquinone. His214 contacts Fe cation. Residue His268 coordinates Fe cation. The helical transmembrane segment at 278 to 294 (GLWMSALGVVGLALNLR) threads the bilayer.

This sequence belongs to the reaction center PufL/M/PsbA/D family. PSII is composed of 1 copy each of membrane proteins PsbA, PsbB, PsbC, PsbD, PsbE, PsbF, PsbH, PsbI, PsbJ, PsbK, PsbL, PsbM, PsbT, PsbX, PsbY, PsbZ, Psb30/Ycf12, at least 3 peripheral proteins of the oxygen-evolving complex and a large number of cofactors. It forms dimeric complexes. It depends on The D1/D2 heterodimer binds P680, chlorophylls that are the primary electron donor of PSII, and subsequent electron acceptors. It shares a non-heme iron and each subunit binds pheophytin, quinone, additional chlorophylls, carotenoids and lipids. There is also a Cl(-1) ion associated with D1 and D2, which is required for oxygen evolution. The PSII complex binds additional chlorophylls, carotenoids and specific lipids. as a cofactor.

The protein resides in the plastid. The protein localises to the chloroplast thylakoid membrane. It catalyses the reaction 2 a plastoquinone + 4 hnu + 2 H2O = 2 a plastoquinol + O2. Its function is as follows. Photosystem II (PSII) is a light-driven water:plastoquinone oxidoreductase that uses light energy to abstract electrons from H(2)O, generating O(2) and a proton gradient subsequently used for ATP formation. It consists of a core antenna complex that captures photons, and an electron transfer chain that converts photonic excitation into a charge separation. The D1/D2 (PsbA/PsbD) reaction center heterodimer binds P680, the primary electron donor of PSII as well as several subsequent electron acceptors. D2 is needed for assembly of a stable PSII complex. This Tupiella akineta (Green alga) protein is Photosystem II D2 protein.